Reading from the N-terminus, the 467-residue chain is Dihydroorotase (467 aa).

The Zn(2+) site is built by His-60 and His-62. Substrate is bound by residues 62 to 64 (HFR) and Asn-94. Residues Glu-146, His-180, His-234, and Asp-313 each contribute to the Zn(2+) site. Asp-313 is an active-site residue. His-317 is a substrate binding site. The segment at 439 to 467 (KPGRGEFLEGSGKRSEEDEEENSEETGSD) is disordered. The segment covering 441–454 (GRGEFLEGSGKRSE) has biased composition (basic and acidic residues). Residues 455–467 (EDEEENSEETGSD) show a composition bias toward acidic residues.

The protein belongs to the metallo-dependent hydrolases superfamily. DHOase family. Class I DHOase subfamily. Zn(2+) is required as a cofactor.

It carries out the reaction (S)-dihydroorotate + H2O = N-carbamoyl-L-aspartate + H(+). The protein operates within pyrimidine metabolism; UMP biosynthesis via de novo pathway; (S)-dihydroorotate from bicarbonate: step 3/3. Catalyzes the reversible cyclization of carbamoyl aspartate to dihydroorotate. The chain is Dihydroorotase from Methanosarcina acetivorans (strain ATCC 35395 / DSM 2834 / JCM 12185 / C2A).